Consider the following 39-residue polypeptide: Cecropin-D-like peptide (39 aa).

As to expression, hemolymph.

It is found in the secreted. In terms of biological role, cecropins have lytic and antibacterial activity against several Gram-positive and Gram-negative bacteria. Has antibacterial activity against the Gram-positive bacteria M.luteus (MIC=34.4 uM), L.monocytogenes (MIC=34.4 uM), and S.lutea (MIC=34.4 uM), and the Gram-negative bacterium E.coli D31 (MIC=8.6 uM). Lacks antibacterial activity against the Gram-positive bacterium B.circulans, and the Gram-negative bacteria E.coli ATCC 25922 and S.typhimurium. Has antifungal activity against A.niger, but lacks antifungal activity against C.albicans, C.wickerhamii, F.oxysporum, P.pastoris, P.tannophilus, S.cerevisiae, T.harzianum, and Z.marxianus. This Galleria mellonella (Greater wax moth) protein is Cecropin-D-like peptide.